The chain runs to 475 residues: Ribulose bisphosphate carboxylase large chain (475 aa).

A propeptide spanning residues 1 to 2 (MS) is cleaved from the precursor. Pro3 is modified (N-acetylproline). Lys14 carries the post-translational modification N6,N6,N6-trimethyllysine. 2 residues coordinate substrate: Asn123 and Thr173. Lys175 acts as the Proton acceptor in catalysis. Lys177 is a substrate binding site. Lys201, Asp203, and Glu204 together coordinate Mg(2+). Position 201 is an N6-carboxylysine (Lys201). His294 serves as the catalytic Proton acceptor. 3 residues coordinate substrate: Arg295, His327, and Ser379.

It belongs to the RuBisCO large chain family. Type I subfamily. In terms of assembly, heterohexadecamer of 8 large chains and 8 small chains; disulfide-linked. The disulfide link is formed within the large subunit homodimers. Mg(2+) serves as cofactor. In terms of processing, the disulfide bond which can form in the large chain dimeric partners within the hexadecamer appears to be associated with oxidative stress and protein turnover.

Its subcellular location is the plastid. It is found in the chloroplast. The catalysed reaction is 2 (2R)-3-phosphoglycerate + 2 H(+) = D-ribulose 1,5-bisphosphate + CO2 + H2O. The enzyme catalyses D-ribulose 1,5-bisphosphate + O2 = 2-phosphoglycolate + (2R)-3-phosphoglycerate + 2 H(+). RuBisCO catalyzes two reactions: the carboxylation of D-ribulose 1,5-bisphosphate, the primary event in carbon dioxide fixation, as well as the oxidative fragmentation of the pentose substrate in the photorespiration process. Both reactions occur simultaneously and in competition at the same active site. This Carpinus caroliniana (American hornbeam) protein is Ribulose bisphosphate carboxylase large chain.